Reading from the N-terminus, the 221-residue chain is Uracil-DNA glycosylase (221 aa).

Catalysis depends on D65, which acts as the Proton acceptor.

This sequence belongs to the uracil-DNA glycosylase (UDG) superfamily. UNG family.

It is found in the cytoplasm. The enzyme catalyses Hydrolyzes single-stranded DNA or mismatched double-stranded DNA and polynucleotides, releasing free uracil.. Its function is as follows. Excises uracil residues from the DNA which can arise as a result of misincorporation of dUMP residues by DNA polymerase or due to deamination of cytosine. This chain is Uracil-DNA glycosylase, found in Christiangramia forsetii (strain DSM 17595 / CGMCC 1.15422 / KT0803) (Gramella forsetii).